The sequence spans 410 residues: Chaperonin GroEL (410 aa).

ATP is bound by residues Thr-29 to Pro-32, Lys-50, and Asp-86 to Thr-90.

It belongs to the chaperonin (HSP60) family. Forms a cylinder of 14 subunits composed of two heptameric rings stacked back-to-back. Interacts with the co-chaperonin GroES.

It is found in the cytoplasm. It catalyses the reaction ATP + H2O + a folded polypeptide = ADP + phosphate + an unfolded polypeptide.. In terms of biological role, together with its co-chaperonin GroES, plays an essential role in assisting protein folding. The GroEL-GroES system forms a nano-cage that allows encapsulation of the non-native substrate proteins and provides a physical environment optimized to promote and accelerate protein folding. The protein is Chaperonin GroEL of Ehrlichia canis.